The sequence spans 336 residues: Flavonoid 6-O-methyltransferase 4 (336 aa).

Positions 140 and 203 each coordinate S-adenosyl-L-methionine. His241 serves as the catalytic Proton acceptor.

The protein belongs to the class I-like SAM-binding methyltransferase superfamily. Cation-independent O-methyltransferase family. As to quaternary structure, homodimer. As to expression, expressed in leaves.

The catalysed reaction is ladanein + S-adenosyl-L-methionine = salvigenin + S-adenosyl-L-homocysteine + H(+). It catalyses the reaction scutellarein 7-methyl ether + S-adenosyl-L-methionine = cirsimaritin + S-adenosyl-L-homocysteine + H(+). It participates in flavonoid metabolism. Flavonoid 6-O-methyltransferase involved in the biosynthesis of polymethoxylated flavonoids natural products such as nevadensin and salvigenin (SALV), aroma compounds which contribute to the flavor of sweet basil, and exhibit pharmacological activities such as anti-allergic, anti-oxidant, antibacterial, anti-proliferative, and anti-inflammatory effects. Catalyzes S-adenosylmethionine-dependent regioselective 6-O-methylation of flavonoids; active on various hydroxylated flavonoid substrates, including scutellarein-7-methyl ether (SCU7Me) and ladanein (LAD). This chain is Flavonoid 6-O-methyltransferase 4, found in Ocimum basilicum (Sweet basil).